Here is a 168-residue protein sequence, read N- to C-terminus: Photosystem I assembly protein Ycf3 (168 aa).

3 TPR repeats span residues 35 to 68, 72 to 105, and 120 to 153; these read AFTYYRDGMSAQSEGNYAEALQNYYEAMRLEIDP, SYILYNIGLIHTSNGEHTKALEYYFRALERNPFL, and GEQAIRQGDSEIAEAWFDQAAEYWKQAIALTPGN.

Belongs to the Ycf3 family.

It localises to the plastid. The protein localises to the chloroplast thylakoid membrane. Its function is as follows. Essential for the assembly of the photosystem I (PSI) complex. May act as a chaperone-like factor to guide the assembly of the PSI subunits. In Gossypium barbadense (Sea Island cotton), this protein is Photosystem I assembly protein Ycf3.